Here is a 452-residue protein sequence, read N- to C-terminus: La-related protein 1B (452 aa).

Residues M1–S22 show a composition bias toward low complexity. The interval M1–R251 is disordered. An N-acetylalanine modification is found at A2. Polar residues predominate over residues L44–Y68. Composition is skewed to low complexity over residues S99 to L117, A136 to S163, N171 to N185, and S206 to R223. A compositionally biased stretch (basic and acidic residues) spans E225–E236. Residues H237–N247 show a composition bias toward polar residues. Residues R328 to P417 form the HTH La-type RNA-binding domain. Positions E419–V452 are disordered. Positions R422 to S434 are enriched in low complexity. The segment covering L435 to S445 has biased composition (polar residues).

The protein belongs to the LARP family.

It is found in the cytoplasm. Its function is as follows. Promotes leaf senescence. The polypeptide is La-related protein 1B (LARP1B) (Arabidopsis thaliana (Mouse-ear cress)).